The primary structure comprises 131 residues: Small ribosomal subunit protein bS6 (131 aa).

The interval E98–E131 is disordered. Positions R104–E131 are enriched in basic and acidic residues.

Belongs to the bacterial ribosomal protein bS6 family.

Its function is as follows. Binds together with bS18 to 16S ribosomal RNA. The polypeptide is Small ribosomal subunit protein bS6 (Shewanella putrefaciens (strain CN-32 / ATCC BAA-453)).